We begin with the raw amino-acid sequence, 197 residues long: Probable GTP-binding protein EngB (197 aa).

The region spanning 2–186 (KVKEVIFAGR…KRDLKQYLLS (185 aa)) is the EngB-type G domain. GTP-binding positions include 10–17 (GRSNVGKS), 35–39 (GTTIR), 52–55 (DLPG), 132–135 (NKMD), and 166–168 (VCA). Ser-17 and Thr-37 together coordinate Mg(2+).

It belongs to the TRAFAC class TrmE-Era-EngA-EngB-Septin-like GTPase superfamily. EngB GTPase family. Requires Mg(2+) as cofactor.

Its function is as follows. Necessary for normal cell division and for the maintenance of normal septation. This Archaeoglobus fulgidus (strain ATCC 49558 / DSM 4304 / JCM 9628 / NBRC 100126 / VC-16) protein is Probable GTP-binding protein EngB.